The primary structure comprises 177 residues: Phycocyanin-645 beta chain (177 aa).

Y18 is a mesobiliverdin binding site. Residues K28, N35, and D39 each contribute to the (2R,3E)-phycocyanobilin site. Positions 50, 54, and 61 each coordinate 15,16-dihydrobiliverdin. The (2R,3E)-phycocyanobilin site is built by R77, C82, R84, and D85. Residue Q148 coordinates 15,16-dihydrobiliverdin. (2R,3E)-phycocyanobilin is bound by residues P154, G156, and C158.

The protein belongs to the phycobiliprotein family. As to quaternary structure, heterotetramer of 2 different alpha chains and 2 identical beta chains which form 2 alpha-beta heterodimers within the heterotetramer. Post-translationally, contains two phycocyanobilin chromophores, one mesobiliverdin chromophore and one 15,16-dihydrobiliverdin chromophore with binding mediated by both the alpha and beta subunits.

The protein localises to the plastid. Its subcellular location is the chloroplast thylakoid membrane. Light-harvesting photosynthetic tetrapyrrole chromophore-protein from the phycobiliprotein complex. This chain is Phycocyanin-645 beta chain, found in Chroomonas sp.